The sequence spans 268 residues: Tryptophan synthase alpha chain (268 aa).

Active-site proton acceptor residues include E49 and D60.

Belongs to the TrpA family. In terms of assembly, tetramer of two alpha and two beta chains.

The catalysed reaction is (1S,2R)-1-C-(indol-3-yl)glycerol 3-phosphate + L-serine = D-glyceraldehyde 3-phosphate + L-tryptophan + H2O. It functions in the pathway amino-acid biosynthesis; L-tryptophan biosynthesis; L-tryptophan from chorismate: step 5/5. The alpha subunit is responsible for the aldol cleavage of indoleglycerol phosphate to indole and glyceraldehyde 3-phosphate. The protein is Tryptophan synthase alpha chain of Edwardsiella ictaluri (strain 93-146).